The sequence spans 155 residues: Endoribonuclease YbeY (155 aa).

Zn(2+) is bound by residues His114, His118, and His124.

The protein belongs to the endoribonuclease YbeY family. Requires Zn(2+) as cofactor.

It localises to the cytoplasm. Single strand-specific metallo-endoribonuclease involved in late-stage 70S ribosome quality control and in maturation of the 3' terminus of the 16S rRNA. The polypeptide is Endoribonuclease YbeY (Escherichia coli O6:K15:H31 (strain 536 / UPEC)).